A 256-amino-acid chain; its full sequence is tRNA (guanine-N(7)-)-methyltransferase (256 aa).

The S-adenosyl-L-methionine site is built by Glu-85, Glu-110, Asp-137, and Asp-159. The active site involves Asp-159. Substrate-binding residues include Lys-163 and Asp-195.

The protein belongs to the class I-like SAM-binding methyltransferase superfamily. TrmB family.

It catalyses the reaction guanosine(46) in tRNA + S-adenosyl-L-methionine = N(7)-methylguanosine(46) in tRNA + S-adenosyl-L-homocysteine. It functions in the pathway tRNA modification; N(7)-methylguanine-tRNA biosynthesis. Catalyzes the formation of N(7)-methylguanine at position 46 (m7G46) in tRNA. This Rhodopseudomonas palustris (strain HaA2) protein is tRNA (guanine-N(7)-)-methyltransferase.